We begin with the raw amino-acid sequence, 493 residues long: Keratin, type II cuticular Hb3 (493 aa).

The tract at residues 1–111 (MTCGFSTVGS…PNAQCVKQEE (111 aa)) is head. In terms of domain architecture, IF rod spans 111–422 (EKEQIKCLNN…RLLEGEEQRL (312 aa)). The coil 1A stretch occupies residues 112 to 146 (KEQIKCLNNRFAAFIDKVRFLEQQNKLLETKLQFY). The interval 147–156 (QNRQCCESNL) is linker 1. The interval 157–257 (EPLFEGYIET…YEEEIRVLQA (101 aa)) is coil 1B. A Glycyl lysine isopeptide (Lys-Gly) (interchain with G-Cter in SUMO1) cross-link involves residue K217. The segment at 258-274 (NISDTSVIVKMDNSRGL) is linker 12. Residues 275–418 (NMDNIVAEIK…ATYRRLLEGE (144 aa)) are coil 2. Residues 419-493 (EQRLCEGVGA…GGGSCSLGRC (75 aa)) form a tail region.

This sequence belongs to the intermediate filament family. In terms of assembly, heterotetramer of two type I and two type II keratins.

This chain is Keratin, type II cuticular Hb3, found in Bos taurus (Bovine).